Reading from the N-terminus, the 205-residue chain is Small ribosomal subunit protein uS4 (205 aa).

Positions 18–46 are disordered; sequence NIWGRPKSPVNRREYGPGQHGQRRKGKLS. The S4 RNA-binding domain maps to 94-154; that stretch reads RRLDTVVFRA…EASKQLAVVL (61 aa).

It belongs to the universal ribosomal protein uS4 family. In terms of assembly, part of the 30S ribosomal subunit. Contacts protein S5. The interaction surface between S4 and S5 is involved in control of translational fidelity.

In terms of biological role, one of the primary rRNA binding proteins, it binds directly to 16S rRNA where it nucleates assembly of the body of the 30S subunit. Its function is as follows. With S5 and S12 plays an important role in translational accuracy. The sequence is that of Small ribosomal subunit protein uS4 from Bradyrhizobium sp. (strain ORS 278).